The sequence spans 286 residues: Type II restriction enzyme NgoMIV (286 aa).

Residues Asp-140 and Cys-186 each contribute to the Mg(2+) site.

Homotetramer. It depends on Mg(2+) as a cofactor.

It catalyses the reaction Endonucleolytic cleavage of DNA to give specific double-stranded fragments with terminal 5'-phosphates.. In terms of biological role, a P subtype restriction enzyme that recognizes the double-stranded sequence 5'-GCCGGC-3' and cleaves after G-1. The polypeptide is Type II restriction enzyme NgoMIV (ngoMIVR) (Neisseria gonorrhoeae).